A 130-amino-acid chain; its full sequence is Small ribosomal subunit protein eS17 (130 aa).

Basic and acidic residues predominate over residues 74–84 (QEEERERRDNY). Residues 74 to 97 (QEEERERRDNYMPEISTVDPSQLT) form a disordered region.

It belongs to the eukaryotic ribosomal protein eS17 family.

This Caenorhabditis elegans protein is Small ribosomal subunit protein eS17 (rps-17).